Reading from the N-terminus, the 269-residue chain is Surfeit locus protein 4 (269 aa).

The next 5 membrane-spanning stretches (helical) occupy residues 64–84, 92–112, 179–199, 203–223, and 239–259; these read LLAS…CILV, YACF…SILW, FFSI…AIGF, LAAL…NAFW, and FFQT…GPGG. The Di-lysine motif signature appears at 266–269; it reads KKEW.

This sequence belongs to the SURF4 family. Found in a complex composed at least of SURF4, TMED2 and TMED10. May interact with LMAN1. Interacts with ZFYVE27 and with KIF5A in a ZFYVE27-dependent manner. Interacts with STING1. Interacts with SAR1B. Interacts with TMEM41B.

Its subcellular location is the endoplasmic reticulum membrane. The protein resides in the endoplasmic reticulum-Golgi intermediate compartment membrane. The protein localises to the golgi apparatus membrane. Functionally, endoplasmic reticulum cargo receptor that mediates the export of lipoproteins by recruiting cargos into COPII vesicles to facilitate their secretion. Acts as a cargo receptor for lipoproteins bearing both APOB and APOA1, thereby regulating lipoprotein delivery and the maintenance of lipid homeostasis. Synergizes with the GTPase SAR1B to mediate transport of circulating lipoproteins. Promotes the secretion of PCSK9. Also mediates the efficient secretion of erythropoietin (EPO). May also play a role in the maintenance of the architecture of the endoplasmic reticulum-Golgi intermediate compartment and of the Golgi. The chain is Surfeit locus protein 4 from Bos taurus (Bovine).